The sequence spans 815 residues: Phenylalanine--tRNA ligase beta subunit (815 aa).

In terms of domain architecture, tRNA-binding spans 39–153 (ASHAQGVVVG…NVPDLGQPVG (115 aa)). A B5 domain is found at 414–498 (KSAEPVKLRR…RLVGFDRFEA (85 aa)). Residues Asp-476, Asp-482, Glu-485, and Glu-486 each coordinate Mg(2+). Residues 721-814 (PTVPAMELDL…LVKQFSAELR (94 aa)) enclose the FDX-ACB domain.

It belongs to the phenylalanyl-tRNA synthetase beta subunit family. Type 1 subfamily. As to quaternary structure, tetramer of two alpha and two beta subunits. Mg(2+) is required as a cofactor.

Its subcellular location is the cytoplasm. The catalysed reaction is tRNA(Phe) + L-phenylalanine + ATP = L-phenylalanyl-tRNA(Phe) + AMP + diphosphate + H(+). This is Phenylalanine--tRNA ligase beta subunit from Prochlorococcus marinus (strain MIT 9313).